The primary structure comprises 37 residues: uncharacterized protein (37 aa).

A helical membrane pass occupies residues 1–21 (MQDLEIFLSIFAFIFVFYFGA).

The protein resides in the endoplasmic reticulum membrane. This is an uncharacterized protein from Saccharomyces cerevisiae (strain ATCC 204508 / S288c) (Baker's yeast).